The chain runs to 513 residues: Probable cytosol aminopeptidase (513 aa).

Mn(2+) contacts are provided by Lys277 and Asp282. Lys289 is a catalytic residue. Asp300, Asp359, and Glu361 together coordinate Mn(2+). Arg363 is a catalytic residue.

Belongs to the peptidase M17 family. Mn(2+) serves as cofactor.

Its subcellular location is the cytoplasm. The enzyme catalyses Release of an N-terminal amino acid, Xaa-|-Yaa-, in which Xaa is preferably Leu, but may be other amino acids including Pro although not Arg or Lys, and Yaa may be Pro. Amino acid amides and methyl esters are also readily hydrolyzed, but rates on arylamides are exceedingly low.. The catalysed reaction is Release of an N-terminal amino acid, preferentially leucine, but not glutamic or aspartic acids.. Its function is as follows. Presumably involved in the processing and regular turnover of intracellular proteins. Catalyzes the removal of unsubstituted N-terminal amino acids from various peptides. This is Probable cytosol aminopeptidase from Mycobacterium sp. (strain JLS).